Consider the following 670-residue polypeptide: NAD-dependent histone deacetylase SIR2 (670 aa).

Disordered regions lie at residues methionine 1 to isoleucine 157 and aspartate 235 to serine 263. Residues asparagine 45–glutamate 68 are compositionally biased toward acidic residues. The span at aspartate 69 to aspartate 81 shows a compositional bias: basic and acidic residues. Acidic residues predominate over residues glutamate 82–glutamate 92. Over residues serine 96–leucine 119 the composition is skewed to polar residues. Over residues alanine 120–threonine 142 the composition is skewed to low complexity. Residues serine 239–serine 261 show a composition bias toward polar residues. The region spanning arginine 293 to aspartate 583 is the Deacetylase sirtuin-type domain. Residues glycine 318–tyrosine 337 and glutamine 400–aspartate 403 contribute to the NAD(+) site. Residue histidine 420 is the Proton acceptor of the active site. Residues cysteine 428, cysteine 431, cysteine 452, and cysteine 455 each contribute to the Zn(2+) site. Residues glycine 527–serine 529, asparagine 552–aspartate 554, and cysteine 569 contribute to the NAD(+) site. Residues alanine 617 to threonine 670 are disordered. Low complexity predominate over residues serine 641–serine 654. Polar residues predominate over residues threonine 659 to threonine 670.

It belongs to the sirtuin family. Class I subfamily. Requires Zn(2+) as cofactor.

The protein localises to the nucleus. It carries out the reaction N(6)-acetyl-L-lysyl-[protein] + NAD(+) + H2O = 2''-O-acetyl-ADP-D-ribose + nicotinamide + L-lysyl-[protein]. Functionally, NAD-dependent deacetylase, which asts as a key regulator of gene expression believed to help form modified chromatin structures on the genes it regulates. It is involved in telomeric silencing and in hm mating type loci silencing. This is NAD-dependent histone deacetylase SIR2 (SIR2) from Kluyveromyces lactis (strain ATCC 8585 / CBS 2359 / DSM 70799 / NBRC 1267 / NRRL Y-1140 / WM37) (Yeast).